The following is a 236-amino-acid chain: Phospholipid hydroperoxide glutathione peroxidase 1, chloroplastic (236 aa).

Residues 1-16 (MVSMTTSSSSYGTFST) are compositionally biased toward low complexity. Residues 1 to 24 (MVSMTTSSSSYGTFSTVVNSSRPN) are disordered. Residues 1–64 (MVSMTTSSSS…PINPGFLFKS (64 aa)) constitute a chloroplast transit peptide. Cys111 is an active-site residue.

This sequence belongs to the glutathione peroxidase family. In terms of tissue distribution, expressed in leaves, stems, flowers, green siliques and seeds.

The protein localises to the plastid. Its subcellular location is the chloroplast. It catalyses the reaction a hydroperoxy polyunsaturated fatty acid + 2 glutathione = a hydroxy polyunsaturated fatty acid + glutathione disulfide + H2O. Its function is as follows. Protects cells and enzymes from oxidative damage, by catalyzing the reduction of hydrogen peroxide, lipid peroxides and organic hydroperoxide, by glutathione. This is Phospholipid hydroperoxide glutathione peroxidase 1, chloroplastic (GPX1) from Arabidopsis thaliana (Mouse-ear cress).